A 217-amino-acid polypeptide reads, in one-letter code: Uracil-DNA glycosylase (217 aa).

The active-site Proton acceptor is the Asp62.

The protein belongs to the uracil-DNA glycosylase (UDG) superfamily. UNG family.

It is found in the cytoplasm. The catalysed reaction is Hydrolyzes single-stranded DNA or mismatched double-stranded DNA and polynucleotides, releasing free uracil.. Excises uracil residues from the DNA which can arise as a result of misincorporation of dUMP residues by DNA polymerase or due to deamination of cytosine. This chain is Uracil-DNA glycosylase, found in Streptococcus pyogenes serotype M28 (strain MGAS6180).